Here is a 261-residue protein sequence, read N- to C-terminus: Ribosomal RNA small subunit methyltransferase A (261 aa).

Residues histidine 13, leucine 15, glycine 40, glutamate 61, aspartate 85, and asparagine 105 each contribute to the S-adenosyl-L-methionine site.

Belongs to the class I-like SAM-binding methyltransferase superfamily. rRNA adenine N(6)-methyltransferase family. RsmA subfamily.

The protein resides in the cytoplasm. It catalyses the reaction adenosine(1518)/adenosine(1519) in 16S rRNA + 4 S-adenosyl-L-methionine = N(6)-dimethyladenosine(1518)/N(6)-dimethyladenosine(1519) in 16S rRNA + 4 S-adenosyl-L-homocysteine + 4 H(+). In terms of biological role, specifically dimethylates two adjacent adenosines (A1518 and A1519) in the loop of a conserved hairpin near the 3'-end of 16S rRNA in the 30S particle. May play a critical role in biogenesis of 30S subunits. This chain is Ribosomal RNA small subunit methyltransferase A, found in Flavobacterium johnsoniae (strain ATCC 17061 / DSM 2064 / JCM 8514 / BCRC 14874 / CCUG 350202 / NBRC 14942 / NCIMB 11054 / UW101) (Cytophaga johnsonae).